We begin with the raw amino-acid sequence, 662 residues long: Calcium-dependent protease (662 aa).

The 334-residue stretch at Q196–V529 folds into the Peptidase S8 domain. Catalysis depends on charge relay system residues D233, H270, and S466. Residues A535–F662 enclose the P/Homo B domain.

Belongs to the peptidase S8 family.

Its subcellular location is the cytoplasm. In terms of biological role, degrades phycobiliproteins in vitro. Has a substrate specificity similar to that of trypsin. In Trichormus variabilis (strain ATCC 29413 / PCC 7937) (Anabaena variabilis), this protein is Calcium-dependent protease (prcA).